We begin with the raw amino-acid sequence, 145 residues long: Transcriptional regulator MraZ (145 aa).

2 consecutive SpoVT-AbrB domains span residues 7–54 (NATN…GPDL) and 83–126 (GVFM…QPQA).

It belongs to the MraZ family. In terms of assembly, forms oligomers.

Its subcellular location is the cytoplasm. The protein resides in the nucleoid. This chain is Transcriptional regulator MraZ, found in Rhizobium leguminosarum bv. trifolii (strain WSM2304).